The following is a 239-amino-acid chain: tRNA (guanine-N(1)-)-methyltransferase (239 aa).

Residues Gly112 and 131–136 (LGDFIL) each bind S-adenosyl-L-methionine.

It belongs to the RNA methyltransferase TrmD family. In terms of assembly, homodimer.

It is found in the cytoplasm. It carries out the reaction guanosine(37) in tRNA + S-adenosyl-L-methionine = N(1)-methylguanosine(37) in tRNA + S-adenosyl-L-homocysteine + H(+). Its function is as follows. Specifically methylates guanosine-37 in various tRNAs. This Clostridium tetani (strain Massachusetts / E88) protein is tRNA (guanine-N(1)-)-methyltransferase.